A 436-amino-acid chain; its full sequence is Histone acetyltransferase type B subunit 2 (436 aa).

WD repeat units follow at residues 136–176 (DHKG…SLPT), 187–227 (GHTK…KGNK), 237–277 (HHSS…TTRA), 284–324 (QHRD…TKLH), and 328–368 (SHTD…EEQT). Positions 370–374 (EDAQD) are interaction with the histone H4 N-terminus. Residues 385–425 (GHTNRISDFSWNLNDPWVLCSAAEDNLLQVWKVADAIVGKD) form a WD 6 repeat.

The protein belongs to the WD repeat RBAP46/RBAP48/MSI1 family. In terms of assembly, component of the HAT-B complex composed of at least hat1 and hat2. The HAT-B complex binds to histone H4 tail.

It is found in the cytoplasm. Its subcellular location is the nucleus. Its function is as follows. Regulatory subunit of the histone acetylase B (HAT-B) complex. The complex acetylates 'Lys-12' of histone H4 which is required for telomeric silencing. In Aspergillus fumigatus (strain ATCC MYA-4609 / CBS 101355 / FGSC A1100 / Af293) (Neosartorya fumigata), this protein is Histone acetyltransferase type B subunit 2 (hat2).